The sequence spans 388 residues: Diphosphomevalonate decarboxylase (388 aa).

Residues 19-22 (YWGK), Arg74, 153-158 (SGSACR), and Thr209 contribute to the (R)-5-diphosphomevalonate site. The disordered stretch occupies residues 367–388 (QGPQGSSESLINDKGLPKAVAN).

Belongs to the diphosphomevalonate decarboxylase family. As to quaternary structure, homodimer.

It catalyses the reaction (R)-5-diphosphomevalonate + ATP = isopentenyl diphosphate + ADP + phosphate + CO2. It participates in isoprenoid biosynthesis; isopentenyl diphosphate biosynthesis via mevalonate pathway; isopentenyl diphosphate from (R)-mevalonate: step 3/3. Its function is as follows. Diphosphomevalonate decarboxylase; part of the second module of ergosterol biosynthesis pathway that includes the middle steps of the pathway. The second module is carried out in the vacuole and involves the formation of farnesyl diphosphate, which is also an important intermediate in the biosynthesis of ubiquinone, dolichol, heme and prenylated proteins. Activity by the mevalonate kinase ERG12 first converts mevalonate into 5-phosphomevalonate. 5-phosphomevalonate is then further converted to 5-diphosphomevalonate by the phosphomevalonate kinase ERG8. The diphosphomevalonate decarboxylase MVD1/ERG19 then produces isopentenyl diphosphate. The isopentenyl-diphosphate delta-isomerase IDI1 then catalyzes the 1,3-allylic rearrangement of the homoallylic substrate isopentenyl (IPP) to its highly electrophilic allylic isomer, dimethylallyl diphosphate (DMAPP). Finally the farnesyl diphosphate synthase ERG20 catalyzes the sequential condensation of isopentenyl pyrophosphate with dimethylallyl pyrophosphate, and then with the resultant geranylpyrophosphate to the ultimate product farnesyl pyrophosphate. The chain is Diphosphomevalonate decarboxylase from Debaryomyces hansenii (strain ATCC 36239 / CBS 767 / BCRC 21394 / JCM 1990 / NBRC 0083 / IGC 2968) (Yeast).